We begin with the raw amino-acid sequence, 396 residues long: Phosphoglycerate kinase (396 aa).

Substrate is bound by residues 21-23 (DFN), Arg36, 59-62 (HLGK), Arg119, and Arg156. ATP contacts are provided by residues Lys206, Glu325, and 352 to 355 (GGDS).

Belongs to the phosphoglycerate kinase family. Monomer.

The protein resides in the cytoplasm. It catalyses the reaction (2R)-3-phosphoglycerate + ATP = (2R)-3-phospho-glyceroyl phosphate + ADP. The protein operates within carbohydrate degradation; glycolysis; pyruvate from D-glyceraldehyde 3-phosphate: step 2/5. The polypeptide is Phosphoglycerate kinase (Staphylococcus saprophyticus subsp. saprophyticus (strain ATCC 15305 / DSM 20229 / NCIMB 8711 / NCTC 7292 / S-41)).